Consider the following 586-residue polypeptide: Arginine--tRNA ligase (586 aa).

The short motif at 131–141 is the 'HIGH' region element; it reads ANPTGPLHVGH.

This sequence belongs to the class-I aminoacyl-tRNA synthetase family. In terms of assembly, monomer.

Its subcellular location is the cytoplasm. It catalyses the reaction tRNA(Arg) + L-arginine + ATP = L-arginyl-tRNA(Arg) + AMP + diphosphate. The chain is Arginine--tRNA ligase from Nitrosomonas eutropha (strain DSM 101675 / C91 / Nm57).